A 250-amino-acid chain; its full sequence is MADS-box transcription factor 47 (250 aa).

A compositionally biased stretch (gly residues) spans 1–10 (MAGGGGGGGR). Disordered regions lie at residues 1 to 20 (MAGG…AATG) and 196 to 250 (SRME…FSSK). Residues 11–20 (GEGEGRAATG) show a composition bias toward basic and acidic residues. Residues 20-80 (GKRERIAIRR…GKLFQFASTS (61 aa)) form the MADS-box domain. One can recognise a K-box domain in the interval 106-198 (QGEDSSTCAR…QLQVSRMSRM (93 aa)). Residues 214–224 (GQSSESVTNAS) show a composition bias toward polar residues.

As to quaternary structure, may interact with MADS18. As to expression, expressed in roots, shoots and developing panicles. Expressed in mature stems and leaves, flowering panicles, developing seeds, and mature seeds.

Its subcellular location is the nucleus. In terms of biological role, transcription factor that modulates expressions of multiple genes involved in cell signaling and gene transcription. Plays a negative regulatory role in brassinosteroid signaling. The protein is MADS-box transcription factor 47 of Oryza sativa subsp. japonica (Rice).